Reading from the N-terminus, the 221-residue chain is Max dimerization protein 1 (221 aa).

The Nuclear localization signal motif lies at 21–49; the sequence is RREREAEHGYASMLPYNSKERDGLKRKSK. Disordered stretches follow at residues 29–67 and 178–221; these read GYASMLPYNSKERDGLKRKSKSKKSSSSRSTHNEMEKNR and SSSS…SIAL. Residues 55-107 enclose the bHLH domain; that stretch reads SSRSTHNEMEKNRRAHLRLCLEKLKMLVPLGPESNRHTTLSLLMRAKLHIKKL. Polar residues predominate over residues 193–221; it reads MQSICSDEGYSSSGLKSIGLQNNPKSIAL.

In terms of assembly, heterodimer with MAX; the interaction is required for DNA-binding. DNA binding requires dimerization with another bHLH protein; does not form homodimers, and does not bind to DNA in the absence of MAX in vitro. As to expression, expressed primarily in cells that have undergone terminal differentiation including notochord, floor plate and cement gland.

The protein resides in the nucleus. Functionally, component of a transcriptional repressor complex together with MAX. In complex with MAX binds to the core DNA sequence 5'-CAC[GA]TG-3'. Antagonizes MYC transcriptional activity by competing with MYC for MAX binding. Binds to the TERT promoter and represses telomerase expression, possibly by interfering with MYC binding. The sequence is that of Max dimerization protein 1 (mxd1) from Xenopus laevis (African clawed frog).